A 306-amino-acid chain; its full sequence is D-alanine--D-alanine ligase B (306 aa).

The region spanning 101–303 (KLLWQGAGLP…FSQLVVRILE (203 aa)) is the ATP-grasp domain. Residue 134–189 (ISALGLPVIVKPSREGSSVGMSKVVAENALQDALRLAFQHDEEVLIEKWLSGPEFT) coordinates ATP. Residues Asp257, Glu270, and Asn272 each coordinate Mg(2+).

This sequence belongs to the D-alanine--D-alanine ligase family. It depends on Mg(2+) as a cofactor. Mn(2+) is required as a cofactor.

It localises to the cytoplasm. The catalysed reaction is 2 D-alanine + ATP = D-alanyl-D-alanine + ADP + phosphate + H(+). Its pathway is cell wall biogenesis; peptidoglycan biosynthesis. In terms of biological role, cell wall formation. The polypeptide is D-alanine--D-alanine ligase B (Shigella flexneri).